The primary structure comprises 44 residues: Capsid protein G8P (44 aa).

At S1 the chain carries N-acetylserine; by host. Residues S1–P19 are Periplasmic-facing. The chain crosses the membrane as a helical span at residues I20–Y37. Residues K38–M44 are Cytoplasmic-facing.

This sequence belongs to the inovirus capsid protein family. In terms of assembly, homomultimerizes. There are several thousands of this protein in the phage capsid.

It is found in the virion. Its subcellular location is the host membrane. Its function is as follows. Self assembles to form a helical capsid wrapping up the viral genomic DNA. The capsid displays a filamentous structure with a length of 760-1950 nm and a width of 6-8 nm. The virion assembly and budding take place at the host inner membrane. The chain is Capsid protein G8P (VIII) from Xanthomonas campestris pv. oryzae (Bacteriophage Xf).